The primary structure comprises 393 residues: DNA-directed RNA polymerase subunit Rpo1C (393 aa).

This sequence belongs to the RNA polymerase beta' chain family. As to quaternary structure, part of the 13-subunit RNA polymerase complex. Interacts with TFS4.

Its subcellular location is the cytoplasm. The enzyme catalyses RNA(n) + a ribonucleoside 5'-triphosphate = RNA(n+1) + diphosphate. In terms of biological role, DNA-dependent RNA polymerase (RNAP) catalyzes the transcription of DNA into RNA using the four ribonucleoside triphosphates as substrates. Forms part of the jaw domain. Reconstitution experiments show this subunit is required for basic activity. The polypeptide is DNA-directed RNA polymerase subunit Rpo1C (Sulfolobus acidocaldarius (strain ATCC 33909 / DSM 639 / JCM 8929 / NBRC 15157 / NCIMB 11770)).